The chain runs to 475 residues: Ribulose bisphosphate carboxylase large chain (475 aa).

The propeptide occupies 1 to 2 (MS). Pro-3 bears the N-acetylproline mark. Position 14 is an N6,N6,N6-trimethyllysine (Lys-14). Residues Asn-123 and Thr-173 each contribute to the substrate site. The active-site Proton acceptor is the Lys-175. Residue Lys-177 participates in substrate binding. Residues Lys-201, Asp-203, and Glu-204 each coordinate Mg(2+). Lys-201 carries the post-translational modification N6-carboxylysine. Residue His-294 is the Proton acceptor of the active site. Arg-295, His-327, and Ser-379 together coordinate substrate.

Belongs to the RuBisCO large chain family. Type I subfamily. In terms of assembly, heterohexadecamer of 8 large chains and 8 small chains; disulfide-linked. The disulfide link is formed within the large subunit homodimers. Mg(2+) is required as a cofactor. The disulfide bond which can form in the large chain dimeric partners within the hexadecamer appears to be associated with oxidative stress and protein turnover.

The protein resides in the plastid. Its subcellular location is the chloroplast. The enzyme catalyses 2 (2R)-3-phosphoglycerate + 2 H(+) = D-ribulose 1,5-bisphosphate + CO2 + H2O. It catalyses the reaction D-ribulose 1,5-bisphosphate + O2 = 2-phosphoglycolate + (2R)-3-phosphoglycerate + 2 H(+). Its function is as follows. RuBisCO catalyzes two reactions: the carboxylation of D-ribulose 1,5-bisphosphate, the primary event in carbon dioxide fixation, as well as the oxidative fragmentation of the pentose substrate in the photorespiration process. Both reactions occur simultaneously and in competition at the same active site. This chain is Ribulose bisphosphate carboxylase large chain, found in Mesostigma viride (Green alga).